Consider the following 116-residue polypeptide: Prefoldin subunit beta (116 aa).

This sequence belongs to the prefoldin subunit beta family. As to quaternary structure, heterohexamer of two alpha and four beta subunits.

The protein localises to the cytoplasm. In terms of biological role, molecular chaperone capable of stabilizing a range of proteins. Seems to fulfill an ATP-independent, HSP70-like function in archaeal de novo protein folding. This Thermococcus onnurineus (strain NA1) protein is Prefoldin subunit beta.